Reading from the N-terminus, the 91-residue chain is Movement protein TGBp3 (91 aa).

Over 1–23 (MLGTRNIPTTSGLPLPPPSSSLS) the chain is Lumenal. A helical transmembrane segment spans residues 24–46 (AYIFPTILAIIFAVFALVAIHIT). Over 47 to 91 (TPEPFCTIHIDGASITITNCPDPAAILNKVAIGPWRGLSYHNNLK) the chain is Cytoplasmic.

Belongs to the Tymovirales TGBp3 protein family.

The protein localises to the host endoplasmic reticulum membrane. Functionally, plays a role in viral cell-to-cell propagation, by facilitating genome transport to neighboring plant cells through plasmosdesmata. May induce the formation of granular vesicles derived from the Endoplasmic reticulum, which align on actin filaments. The polypeptide is Movement protein TGBp3 (Cymbidium mosaic virus (strain Singapore)).